Here is a 199-residue protein sequence, read N- to C-terminus: Imidazole glycerol phosphate synthase subunit HisH (199 aa).

Residues 1–199 form the Glutamine amidotransferase type-1 domain; sequence MTVVVDYEMG…QILKNLREML (199 aa). Catalysis depends on Cys79, which acts as the Nucleophile. Residues His180 and Glu182 contribute to the active site.

As to quaternary structure, heterodimer of HisH and HisF.

It localises to the cytoplasm. It catalyses the reaction 5-[(5-phospho-1-deoxy-D-ribulos-1-ylimino)methylamino]-1-(5-phospho-beta-D-ribosyl)imidazole-4-carboxamide + L-glutamine = D-erythro-1-(imidazol-4-yl)glycerol 3-phosphate + 5-amino-1-(5-phospho-beta-D-ribosyl)imidazole-4-carboxamide + L-glutamate + H(+). The catalysed reaction is L-glutamine + H2O = L-glutamate + NH4(+). Its pathway is amino-acid biosynthesis; L-histidine biosynthesis; L-histidine from 5-phospho-alpha-D-ribose 1-diphosphate: step 5/9. IGPS catalyzes the conversion of PRFAR and glutamine to IGP, AICAR and glutamate. The HisH subunit catalyzes the hydrolysis of glutamine to glutamate and ammonia as part of the synthesis of IGP and AICAR. The resulting ammonia molecule is channeled to the active site of HisF. In Carboxydothermus hydrogenoformans (strain ATCC BAA-161 / DSM 6008 / Z-2901), this protein is Imidazole glycerol phosphate synthase subunit HisH.